The primary structure comprises 740 residues: Ion-translocating oxidoreductase complex subunit C (740 aa).

2 consecutive 4Fe-4S ferredoxin-type domains span residues Gly369–Tyr397 and Lys407–Phe436. Cys377, Cys380, Cys383, Cys387, Cys416, Cys419, Cys422, and Cys426 together coordinate [4Fe-4S] cluster. 3 disordered regions span residues Lys602 to Lys652, Ala664 to Ala685, and Lys695 to Pro714. The segment covering Gln605–Gln615 has biased composition (low complexity).

This sequence belongs to the 4Fe4S bacterial-type ferredoxin family. RnfC subfamily. The complex is composed of six subunits: RsxA, RsxB, RsxC, RsxD, RsxE and RsxG. [4Fe-4S] cluster serves as cofactor.

It localises to the cell inner membrane. In terms of biological role, part of a membrane-bound complex that couples electron transfer with translocation of ions across the membrane. Required to maintain the reduced state of SoxR. In Escherichia coli O157:H7, this protein is Ion-translocating oxidoreductase complex subunit C.